A 187-amino-acid polypeptide reads, in one-letter code: UPF0340 protein SPD_0576 (187 aa).

This sequence belongs to the UPF0340 family.

The protein is UPF0340 protein SPD_0576 of Streptococcus pneumoniae serotype 2 (strain D39 / NCTC 7466).